Here is a 203-residue protein sequence, read N- to C-terminus: Probable GTP-binding protein EngB (203 aa).

An EngB-type G domain is found at 22-195 (GIPEIALAGR…WEEIVNQYNQ (174 aa)). GTP contacts are provided by residues 30 to 37 (GRSNVGKS), 57 to 61 (GKTRT), 75 to 78 (DLPG), 142 to 145 (TKAD), and 174 to 176 (VSS). Mg(2+)-binding residues include serine 37 and threonine 59.

Belongs to the TRAFAC class TrmE-Era-EngA-EngB-Septin-like GTPase superfamily. EngB GTPase family. The cofactor is Mg(2+).

In terms of biological role, necessary for normal cell division and for the maintenance of normal septation. This Clostridioides difficile (strain 630) (Peptoclostridium difficile) protein is Probable GTP-binding protein EngB.